The sequence spans 937 residues: Lysosomal alpha-glucosidase (937 aa).

A signal peptide spans 1 to 23 (MMRWPPCSRPLLGVCTLLSLALL). The propeptide occupies 24 to 60 (GHILLHDLEVVPRELRGFSQDEIHQACQPGASSPECR). In terms of domain architecture, P-type spans 68-118 (TQCDLPPNSRFDCAPDKGITPQQCEARGCCYMPAEWPPDAQMGQPWCFFPP). 3 disulfides stabilise this stretch: cysteine 70–cysteine 97, cysteine 80–cysteine 96, and cysteine 91–cysteine 114. 4 N-linked (GlcNAc...) asparagine glycosylation sites follow: asparagine 127, asparagine 220, asparagine 259, and asparagine 377. A substrate-binding site is contributed by aspartate 391. N-linked (GlcNAc...) asparagine glycosylation is present at asparagine 457. Residue aspartate 505 is the Nucleophile of the active site. Glutamate 508 is a catalytic residue. Cysteine 520 and cysteine 545 are oxidised to a cystine. Substrate is bound by residues arginine 587 and aspartate 603. The cysteines at positions 634 and 645 are disulfide-linked. Residue asparagine 639 is glycosylated (N-linked (GlcNAc...) asparagine). Residue histidine 661 participates in substrate binding. N-linked (GlcNAc...) asparagine glycans are attached at residues asparagine 867, asparagine 888, and asparagine 910.

This sequence belongs to the glycosyl hydrolase 31 family.

The protein resides in the lysosome. It localises to the lysosome membrane. The enzyme catalyses Hydrolysis of terminal, non-reducing (1-&gt;4)-linked alpha-D-glucose residues with release of alpha-D-glucose.. Functionally, essential for the degradation of glycogen in lysosomes. Has highest activity on alpha-1,4-linked glycosidic linkages, but can also hydrolyze alpha-1,6-linked glucans. This is Lysosomal alpha-glucosidase (GAA) from Bos taurus (Bovine).